The sequence spans 435 residues: Serine carboxypeptidase-like 14 (435 aa).

The first 23 residues, 1 to 23, serve as a signal peptide directing secretion; sequence MGSWIPKLLLLQLVLLLTKHADS. 3 disulfides stabilise this stretch: C82–C325, C246–C260, and C284–C291. N103 is a glycosylation site (N-linked (GlcNAc...) asparagine). S178 is a catalytic residue. N344 carries an N-linked (GlcNAc...) asparagine glycan. D360 is a catalytic residue. Residue N376 is glycosylated (N-linked (GlcNAc...) asparagine). Residue H413 is part of the active site.

It belongs to the peptidase S10 family. Expressed in senescent leaves.

The protein localises to the secreted. Its function is as follows. Probable carboxypeptidase. The polypeptide is Serine carboxypeptidase-like 14 (SCPL14) (Arabidopsis thaliana (Mouse-ear cress)).